The sequence spans 301 residues: uncharacterized protein (301 aa).

Topologically, residues 1 to 5 (MSYKK) are extracellular. A helical transmembrane segment spans residues 6–26 (FVYFINLFFLLGATLLTFFLI). Over 27–112 (LAGGRTTGVL…NRNAYYYLSR (86 aa)) the chain is Cytoplasmic. Residues 113 to 133 (VGWAMLLIGLFFLLITLVSVI) traverse the membrane as a helical segment. Residues 134-143 (ASLIRYNRRT) are Extracellular-facing. Residues 144–164 (AALATAMSWITLFFITLSACL) form a helical membrane-spanning segment. Topologically, residues 165–191 (YTGCYAKAVKAFHHENRDARLGPKNFG) are cytoplasmic. The helical transmembrane segment at 192 to 212 (LIWTTVFLLIVNAICCTIMVA) threads the bilayer. At 213–301 (THKRNEYIYD…YTEQNVPVVS (89 aa)) the chain is on the extracellular side. Positions 254–301 (VQQSQSHQNHRFFKKLRTKKRTVTSAGDEPDRVQEERVYTEQNVPVVS) are disordered. The span at 261 to 275 (QNHRFFKKLRTKKRT) shows a compositional bias: basic residues. A compositionally biased stretch (basic and acidic residues) spans 282 to 292 (EPDRVQEERVY).

The protein belongs to the SUR7 family.

The protein resides in the cell membrane. Involved in sporulation and affects the sphingolipid composition of the plasma membrane. This is an uncharacterized protein from Saccharomyces cerevisiae (strain ATCC 204508 / S288c) (Baker's yeast).